We begin with the raw amino-acid sequence, 196 residues long: Ribonuclease S-F11 (196 aa).

Cysteines 16 and 21 form a disulfide. N-linked (GlcNAc...) asparagine glycosylation is present at Asn-28. The active-site Proton donor is the His-32. RNA contacts are provided by residues His-32 and 69–70 (QL). Cystine bridges form between Cys-46/Cys-94, Cys-153/Cys-186, and Cys-169/Cys-180. The active site involves Gln-87. 90-91 (KH) contacts RNA. Catalysis depends on His-91, which acts as the Proton acceptor.

This sequence belongs to the RNase T2 family. As to quaternary structure, monomer.

The protein resides in the secreted. Its subcellular location is the extracellular space. The catalysed reaction is a ribonucleotidyl-ribonucleotide-RNA + H2O = a 3'-end 3'-phospho-ribonucleotide-RNA + a 5'-end dephospho-ribonucleoside-RNA + H(+). Its function is as follows. Self-incompatibility (SI) is the inherited ability of a flowering plant to prevent self-fertilization by discriminating between self and non-self pollen during pollination. In many species of the Solanaceae, self-incompatibility is controlled by the single, multiallelic locus S. The chain is Ribonuclease S-F11 from Nicotiana alata (Winged tobacco).